A 458-amino-acid polypeptide reads, in one-letter code: Jacalin-related lectin 22 (458 aa).

Jacalin-type lectin domains follow at residues 5–153, 160–301, and 311–453; these read YRKL…YFVL, LYKL…YFGP, and SKKL…TIVP.

This sequence belongs to the jacalin lectin family. As to quaternary structure, component of the PYK10 complex, at least composed of PYK10/BGLU23, BGLU21, BGLU22, JAL22, JAL23, PBP1/JAL30, PBP2/JAL31, JAL32, JAL33, JAL34, JAL35, GLL22 and GLL23.

In terms of biological role, inhibitor-type lectin that may regulate the correct polymerization and activation of BGLU23/PYK10 upon tissue damage. The protein is Jacalin-related lectin 22 (JAL22) of Arabidopsis thaliana (Mouse-ear cress).